A 206-amino-acid chain; its full sequence is Probable nicotinate-nucleotide adenylyltransferase (206 aa).

This sequence belongs to the NadD family.

It carries out the reaction nicotinate beta-D-ribonucleotide + ATP + H(+) = deamido-NAD(+) + diphosphate. It functions in the pathway cofactor biosynthesis; NAD(+) biosynthesis; deamido-NAD(+) from nicotinate D-ribonucleotide: step 1/1. Catalyzes the reversible adenylation of nicotinate mononucleotide (NaMN) to nicotinic acid adenine dinucleotide (NaAD). The chain is Probable nicotinate-nucleotide adenylyltransferase from Gloeobacter violaceus (strain ATCC 29082 / PCC 7421).